The chain runs to 74 residues: Large ribosomal subunit protein bL31 (74 aa).

The protein belongs to the bacterial ribosomal protein bL31 family. Type A subfamily. In terms of assembly, part of the 50S ribosomal subunit.

Binds the 23S rRNA. The sequence is that of Large ribosomal subunit protein bL31 from Afipia carboxidovorans (strain ATCC 49405 / DSM 1227 / KCTC 32145 / OM5) (Oligotropha carboxidovorans).